Here is a 510-residue protein sequence, read N- to C-terminus: ATP synthase subunit alpha (510 aa).

Residue 169-176 (GDRQTGKT) participates in ATP binding.

This sequence belongs to the ATPase alpha/beta chains family. In terms of assembly, F-type ATPases have 2 components, CF(1) - the catalytic core - and CF(0) - the membrane proton channel. CF(1) has five subunits: alpha(3), beta(3), gamma(1), delta(1), epsilon(1). CF(0) has three main subunits: a(1), b(2) and c(9-12). The alpha and beta chains form an alternating ring which encloses part of the gamma chain. CF(1) is attached to CF(0) by a central stalk formed by the gamma and epsilon chains, while a peripheral stalk is formed by the delta and b chains.

It is found in the cell inner membrane. The enzyme catalyses ATP + H2O + 4 H(+)(in) = ADP + phosphate + 5 H(+)(out). In terms of biological role, produces ATP from ADP in the presence of a proton gradient across the membrane. The alpha chain is a regulatory subunit. In Nitrobacter winogradskyi (strain ATCC 25391 / DSM 10237 / CIP 104748 / NCIMB 11846 / Nb-255), this protein is ATP synthase subunit alpha.